The primary structure comprises 477 residues: Aspartyl/glutamyl-tRNA(Asn/Gln) amidotransferase subunit B (477 aa).

Belongs to the GatB/GatE family. GatB subfamily. Heterotrimer of A, B and C subunits.

The catalysed reaction is L-glutamyl-tRNA(Gln) + L-glutamine + ATP + H2O = L-glutaminyl-tRNA(Gln) + L-glutamate + ADP + phosphate + H(+). It catalyses the reaction L-aspartyl-tRNA(Asn) + L-glutamine + ATP + H2O = L-asparaginyl-tRNA(Asn) + L-glutamate + ADP + phosphate + 2 H(+). Its function is as follows. Allows the formation of correctly charged Asn-tRNA(Asn) or Gln-tRNA(Gln) through the transamidation of misacylated Asp-tRNA(Asn) or Glu-tRNA(Gln) in organisms which lack either or both of asparaginyl-tRNA or glutaminyl-tRNA synthetases. The reaction takes place in the presence of glutamine and ATP through an activated phospho-Asp-tRNA(Asn) or phospho-Glu-tRNA(Gln). The polypeptide is Aspartyl/glutamyl-tRNA(Asn/Gln) amidotransferase subunit B (Lawsonia intracellularis (strain PHE/MN1-00)).